Reading from the N-terminus, the 335-residue chain is 3-dehydroquinate synthase (335 aa).

Residues 56–61, 90–94, 114–115, Lys-127, Lys-135, and 153–156 each bind NAD(+); these read DGEKYK, GVITD, TT, and FLKT. Residues Glu-168, His-227, and His-243 each contribute to the Zn(2+) site.

It belongs to the sugar phosphate cyclases superfamily. Dehydroquinate synthase family. It depends on NAD(+) as a cofactor. Co(2+) is required as a cofactor. Zn(2+) serves as cofactor.

The protein localises to the cytoplasm. It carries out the reaction 7-phospho-2-dehydro-3-deoxy-D-arabino-heptonate = 3-dehydroquinate + phosphate. It functions in the pathway metabolic intermediate biosynthesis; chorismate biosynthesis; chorismate from D-erythrose 4-phosphate and phosphoenolpyruvate: step 2/7. In terms of biological role, catalyzes the conversion of 3-deoxy-D-arabino-heptulosonate 7-phosphate (DAHP) to dehydroquinate (DHQ). The chain is 3-dehydroquinate synthase from Pyrococcus furiosus (strain ATCC 43587 / DSM 3638 / JCM 8422 / Vc1).